The following is a 267-amino-acid chain: Glucosamine-6-phosphate deaminase (267 aa).

Asp76 serves as the catalytic Proton acceptor; for enolization step. Asp145 functions as the For ring-opening step in the catalytic mechanism. His147 (proton acceptor; for ring-opening step) is an active-site residue. Catalysis depends on Glu152, which acts as the For ring-opening step.

The protein belongs to the glucosamine/galactosamine-6-phosphate isomerase family. Homohexamer.

It localises to the cytoplasm. It carries out the reaction alpha-D-glucosamine 6-phosphate + H2O = beta-D-fructose 6-phosphate + NH4(+). It functions in the pathway nucleotide-sugar biosynthesis; UDP-N-acetyl-alpha-D-glucosamine biosynthesis; alpha-D-glucosamine 6-phosphate from D-fructose 6-phosphate: step 1/1. Its function is as follows. Catalyzes the reversible conversion of alpha-D-glucosamine 6-phosphate (GlcN-6P) into beta-D-fructose 6-phosphate (Fru-6P) and ammonium ion, a regulatory reaction step in de novo uridine diphosphate-N-acetyl-alpha-D-glucosamine (UDP-GlcNAc) biosynthesis via hexosamine pathway. This is Glucosamine-6-phosphate deaminase from Dictyostelium discoideum (Social amoeba).